Reading from the N-terminus, the 577-residue chain is Protein hinderin (577 aa).

Ser-21 is modified (phosphoserine). The stretch at 91-167 (LKDLCLEDKR…CQELLSLYQK (77 aa)) forms a coiled coil. The residue at position 179 (Ser-179) is a Phosphoserine. Residues 251–282 (TLHHPKDDLDKIPSETTTCNCESPGRKPAVPT) are disordered. Positions 254–263 (HPKDDLDKIP) are enriched in basic and acidic residues. Residues 358-402 (LKKQISEDRKQQLMLQKMELEIEKERLQHLLAQQETKLLLKQQQL) adopt a coiled-coil conformation. Disordered stretches follow at residues 425–444 (SSSI…RKER), 449–492 (FHSH…GSLK), and 520–540 (LSPN…GAWN). A compositionally biased stretch (basic and acidic residues) spans 449 to 468 (FHSHMKDDAQWSCQKKDTCR). Ser-490 and Ser-521 each carry phosphoserine.

In terms of assembly, interacts (via N- and C-terminal domains) with SMC3 (via central hinge region). Widely expressed.

Its function is as follows. Competes with SMC1 for binding to SMC3. May affect the availability of SMC3 to engage in the formation of multimeric protein complexes. This chain is Protein hinderin (KIAA1328), found in Homo sapiens (Human).